We begin with the raw amino-acid sequence, 237 residues long: Leucyl/phenylalanyl-tRNA--protein transferase (237 aa).

This sequence belongs to the L/F-transferase family.

It is found in the cytoplasm. It catalyses the reaction N-terminal L-lysyl-[protein] + L-leucyl-tRNA(Leu) = N-terminal L-leucyl-L-lysyl-[protein] + tRNA(Leu) + H(+). The catalysed reaction is N-terminal L-arginyl-[protein] + L-leucyl-tRNA(Leu) = N-terminal L-leucyl-L-arginyl-[protein] + tRNA(Leu) + H(+). The enzyme catalyses L-phenylalanyl-tRNA(Phe) + an N-terminal L-alpha-aminoacyl-[protein] = an N-terminal L-phenylalanyl-L-alpha-aminoacyl-[protein] + tRNA(Phe). Its function is as follows. Functions in the N-end rule pathway of protein degradation where it conjugates Leu, Phe and, less efficiently, Met from aminoacyl-tRNAs to the N-termini of proteins containing an N-terminal arginine or lysine. The sequence is that of Leucyl/phenylalanyl-tRNA--protein transferase from Shewanella baltica (strain OS223).